The sequence spans 1551 residues: Pentafunctional AROM polypeptide 1 (1551 aa).

The segment at 1–379 is 3-dehydroquinate synthase; that stretch reads MSIEKVSILG…YESKAHQIFK (379 aa). Residues 42–44, 80–83, 111–113, and Asp-116 contribute to the NAD(+) site; these read DTN, ENHK, and GGV. Arg-127 provides a ligand contact to 7-phospho-2-dehydro-3-deoxy-D-arabino-heptonate. 136–137 contributes to the NAD(+) binding site; the sequence is TT. Residues Asp-143 and Lys-149 each coordinate 7-phospho-2-dehydro-3-deoxy-D-arabino-heptonate. Lys-158 lines the NAD(+) pocket. Asn-159 provides a ligand contact to 7-phospho-2-dehydro-3-deoxy-D-arabino-heptonate. Residues 176 to 179 and Asn-187 contribute to the NAD(+) site; that span reads FLQT. A Zn(2+)-binding site is contributed by Glu-191. 7-phospho-2-dehydro-3-deoxy-D-arabino-heptonate is bound by residues 191 to 194 and Lys-243; that span reads EVVK. Glu-253 (proton acceptor; for 3-dehydroquinate synthase activity) is an active-site residue. Residues 257 to 261 and His-264 each bind 7-phospho-2-dehydro-3-deoxy-D-arabino-heptonate; that span reads RNLLN. Residue His-264 participates in Zn(2+) binding. Residue His-268 is the Proton acceptor; for 3-dehydroquinate synthase activity of the active site. Residues His-280 and Lys-351 each contribute to the 7-phospho-2-dehydro-3-deoxy-D-arabino-heptonate site. His-280 is a binding site for Zn(2+). The EPSP synthase stretch occupies residues 392–835; the sequence is VHPFANRHPE…WDVLHSKFNA (444 aa). The tract at residues 854-1044 is shikimate kinase; the sequence is DRSIVIIGMR…LPATRSTFVT (191 aa). Position 861 to 868 (861 to 868) interacts with ATP; the sequence is GMRAAGKT. The segment at 1045–1258 is 3-dehydroquinase; the sequence is LTYPDLRKVP…IGVGQLSLKE (214 aa). Catalysis depends on His-1162, which acts as the Proton acceptor; for 3-dehydroquinate dehydratase activity. Residue Lys-1191 is the Schiff-base intermediate with substrate; for 3-dehydroquinate dehydratase activity of the active site. The tract at residues 1271-1551 is shikimate dehydrogenase; sequence EKEFWVVGSP…KVIHSAVLNE (281 aa).

This sequence in the N-terminal section; belongs to the sugar phosphate cyclases superfamily. Dehydroquinate synthase family. The protein in the 2nd section; belongs to the EPSP synthase family. In the 3rd section; belongs to the shikimate kinase family. It in the 4th section; belongs to the type-I 3-dehydroquinase family. This sequence in the C-terminal section; belongs to the shikimate dehydrogenase family. As to quaternary structure, homodimer. The cofactor is Zn(2+).

Its subcellular location is the cytoplasm. It carries out the reaction 7-phospho-2-dehydro-3-deoxy-D-arabino-heptonate = 3-dehydroquinate + phosphate. The catalysed reaction is 3-dehydroquinate = 3-dehydroshikimate + H2O. The enzyme catalyses shikimate + NADP(+) = 3-dehydroshikimate + NADPH + H(+). It catalyses the reaction shikimate + ATP = 3-phosphoshikimate + ADP + H(+). It carries out the reaction 3-phosphoshikimate + phosphoenolpyruvate = 5-O-(1-carboxyvinyl)-3-phosphoshikimate + phosphate. The protein operates within metabolic intermediate biosynthesis; chorismate biosynthesis; chorismate from D-erythrose 4-phosphate and phosphoenolpyruvate: step 2/7. It participates in metabolic intermediate biosynthesis; chorismate biosynthesis; chorismate from D-erythrose 4-phosphate and phosphoenolpyruvate: step 3/7. It functions in the pathway metabolic intermediate biosynthesis; chorismate biosynthesis; chorismate from D-erythrose 4-phosphate and phosphoenolpyruvate: step 4/7. Its pathway is metabolic intermediate biosynthesis; chorismate biosynthesis; chorismate from D-erythrose 4-phosphate and phosphoenolpyruvate: step 5/7. The protein operates within metabolic intermediate biosynthesis; chorismate biosynthesis; chorismate from D-erythrose 4-phosphate and phosphoenolpyruvate: step 6/7. In terms of biological role, the AROM polypeptide catalyzes 5 consecutive enzymatic reactions in prechorismate polyaromatic amino acid biosynthesis. The sequence is that of Pentafunctional AROM polypeptide 1 from Lodderomyces elongisporus (strain ATCC 11503 / CBS 2605 / JCM 1781 / NBRC 1676 / NRRL YB-4239) (Yeast).